The primary structure comprises 416 residues: Putative competence-damage inducible protein (416 aa).

This sequence belongs to the CinA family.

In Bacillus subtilis (strain 168), this protein is Putative competence-damage inducible protein.